A 129-amino-acid polypeptide reads, in one-letter code: Holo-[acyl-carrier-protein] synthase (129 aa).

Positions 8 and 58 each coordinate Mg(2+).

Belongs to the P-Pant transferase superfamily. AcpS family. Requires Mg(2+) as cofactor.

Its subcellular location is the cytoplasm. The enzyme catalyses apo-[ACP] + CoA = holo-[ACP] + adenosine 3',5'-bisphosphate + H(+). Transfers the 4'-phosphopantetheine moiety from coenzyme A to a Ser of acyl-carrier-protein. This Geobacillus kaustophilus (strain HTA426) protein is Holo-[acyl-carrier-protein] synthase.